The chain runs to 756 residues: Rab11 family-interacting protein 3 (756 aa).

Residues 1 to 24 (MASAPPASPPGSEPPGPDPEPGGP) show a composition bias toward pro residues. A disordered region spans residues 1 to 204 (MASAPPASPP…SEPVGSQEDG (204 aa)). Positions 2 to 435 (ASAPPASPPG…RLSSKKVARY (434 aa)) are important for binding to DYNC1LI1. Low complexity predominate over residues 27–39 (PGAAQLAPGPAEL). A Phosphoserine modification is found at serine 52. Over residues 53–68 (PGLDEPAPGAAADGGA) the composition is skewed to low complexity. Positions 84–94 (DPGPSAPPPRS) are enriched in pro residues. Serine 102 bears the Phosphoserine; by CDK1 mark. EF-hand domains follow at residues 202 to 237 (EDGP…YGAE) and 234 to 269 (YGAE…IRNG). Aspartate 215, aspartate 217, aspartate 219, aspartate 226, aspartate 247, serine 249, and aspartate 258 together coordinate Ca(2+). A phosphoserine mark is found at serine 281, serine 348, serine 488, serine 538, serine 647, and serine 648. Residues 484-588 (GEQHSRLRQE…LLDEIESLTL (105 aa)) form an ARF-binding domain (ABD) region. Positions 485–694 (EQHSRLRQEN…NGQIITLSIQ (210 aa)) form a coiled coil. The interval 645-664 (RSSSMGLQEYHSRARESELE) is disordered. Over residues 654 to 664 (YHSRARESELE) the composition is skewed to basic and acidic residues. The 63-residue stretch at 694-756 (QGAKSLFSTA…ETNPSILEVK (63 aa)) folds into the FIP-RBD domain.

Homodimer. Interacts with RAB11A; the interaction is direct and is required for the recruitment to endosomes. Interacts with RAB11B. Forms a ternary complex with RAB11A and dynein intermediate chain DYNC1LI1; RAB11FIP3 links RAB11A to dynein and the interaction regulates endocytic trafficking. Interacts with dynein intermediate chain and dynactin (DCTN1); the interaction activates dynein processivity. Interacts with ARF6 and EXOC7; the interaction serves for recruitment and tethering of recycling endosomes-derived vesicles to the cleavage furrow/midbody. Interacts with RACGAP1/MgcRacGAP; the interaction occurs at late telophase and is required for recruitment and tethering of recycling endosomes-derived vesicles to the cleavage furrow/midbody. Forms a complex with RAB11A and Rabin8/RAB3IP, probably a heterohexamer with two of each protein subunit, where RAB3IP and RAB11FIP3 simultaneously bind to RAB11A; the complex promotes preciliary trafficking. Forms a complex containing RAB11A, ASAP1, RAB3IP, RAP11FIP3 and ARF4; the complex promotes preciliary trafficking; the complex binds to RHO in photoreceptor cells and promotes RHO ciliary transport. Interacts with RAB11FIP4. Interacts with RAB25. Post-translationally, phosphorylated at Ser-102 by CDK1 during metaphase, and dephosphorylated as cells enter telophase.

The protein localises to the endosome membrane. It localises to the recycling endosome membrane. Its subcellular location is the cytoplasm. It is found in the cytoskeleton. The protein resides in the microtubule organizing center. The protein localises to the centrosome. It localises to the cleavage furrow. Its subcellular location is the midbody. It is found in the golgi apparatus membrane. The protein resides in the golgi apparatus. The protein localises to the trans-Golgi network membrane. Functionally, downstream effector molecule for Rab11 GTPase which is involved in endocytic trafficking, cytokinesis and intracellular ciliogenesis by participating in membrane delivery. Recruited by Rab11 to endosomes where it links Rab11 to dynein motor complex. The functional Rab11-RAB11FIP3-dynein complex regulates the movement of peripheral sorting endosomes (SE) along microtubule tracks toward the microtubule organizing center/centrosome, generating the endocytic recycling compartment (ERC) during interphase of cell cycle. Facilitates the interaction between dynein and dynactin and activates dynein processivity. Binding with ASAP1 is needed to regulate the pericentrosomal localization of recycling endosomes. The Rab11-RAB11FIP3 complex is also implicated in the transport during telophase of vesicles derived from recycling endosomes to the cleavage furrow via centrosome-anchored microtubules, where the vesicles function to deliver membrane during late cytokinesis and abscission. The recruitment of Rab11-RAB11FIP3-containing endosomes to the cleavage furrow and tethering to the midbody is co-mediated by RAB11FIP3 interaction with ARF6-exocyst and RACGAP1-MKLP1 tethering complexes. Also involved in the Rab11-Rabin8-Rab8 ciliogenesis cascade by facilitating the orderly assembly of a ciliary targeting complex containing Rab11, ASAP1, Rabin8/RAB3IP, RAB11FIP3 and ARF4, which directs preciliary vesicle trafficking to mother centriole and ciliogenesis initiation. Also promotes the activity of Rab11 and ASAP1 in the ARF4-dependent Golgi-to-cilia transport of the sensory receptor rhodopsin. Competes with WDR44 for binding to Rab11, which controls intracellular ciliogenesis pathway. May play a role in breast cancer cell motility by regulating actin cytoskeleton. This is Rab11 family-interacting protein 3 from Homo sapiens (Human).